Here is a 187-residue protein sequence, read N- to C-terminus: COMM domain-containing protein 1 (187 aa).

The COMM domain occupies Ser112 to Ser186.

This sequence belongs to the COMM domain-containing protein 1 family. In terms of assembly, component of the commander complex consisting of the CCC subcomplex and the retriever subcomplex.

Functionally, scaffold protein in the commander complex that is essential for endosomal recycling of transmembrane cargos; the commander complex is composed of the CCC subcomplex and the retriever subcomplex. This is COMM domain-containing protein 1 (commd1) from Dictyostelium discoideum (Social amoeba).